A 2240-amino-acid chain; its full sequence is Cadherin-89D (2240 aa).

Cadherin domains lie at 70–179 (SEGV…APEF), 180–295 (LNVP…PPKF), 296–411 (TEGV…VPEF), 412–528 (EADY…TPKF), and 529–643 (EHGN…APYE). Residues Asn-114, Asn-119, Asn-191, Asn-278, Asn-334, Asn-417, Asn-585, Asn-720, Asn-752, Asn-822, Asn-833, Asn-983, Asn-989, Asn-1006, Asn-1255, Asn-1318, Asn-1486, Asn-1529, and Asn-1556 are each glycosylated (N-linked (GlcNAc...) asparagine). The tract at residues 814–844 (MPSEPTSRNITMGSRFRSRNRSRSSKSKRRL) is disordered. 5 Cadherin domains span residues 824-927 (TMGS…APKF), 928-1087 (NALT…APMF), 1171-1284 (TTKC…APTF), 1285-1389 (KKSW…RPEF), and 1411-1520 (MLPV…PPKS). A compositionally biased stretch (basic residues) spans 829 to 844 (FRSRNRSRSSKSKRRL). Cadherin domains follow at residues 1534–1660 (QHAY…APKF) and 1661–1774 (RGNG…MPVE). The chain crosses the membrane as a helical span at residues 1884 to 1904 (FVTVVLLALISLGALIAACCY). The Cytoplasmic portion of the chain corresponds to 1905–2240 (VCMRQKRRLW…LEFSKSNSLF (336 aa)). 2 disordered regions span residues 1930-1972 (IAGI…PESV) and 2121-2140 (AHLE…EDSL). Basic residues predominate over residues 1939 to 1952 (QKQRRQRQQRHTQR). Residues 1953-1964 (CSKGSTGSQRPT) show a composition bias toward polar residues.

It is found in the cell membrane. Cadherins are calcium-dependent cell adhesion proteins. They preferentially interact with themselves in a homophilic manner in connecting cells. This chain is Cadherin-89D (Cad89D), found in Drosophila melanogaster (Fruit fly).